A 393-amino-acid chain; its full sequence is Beta-1,4-galactosyltransferase 3 (393 aa).

Over 1–10 the chain is Cytoplasmic; that stretch reads MLRRLLERPC. The helical; Signal-anchor for type II membrane protein transmembrane segment at 11-31 threads the bilayer; that stretch reads TLALLVGSQLAVMMYLSLGGF. At 32-393 the chain is on the lumenal side; the sequence is RSLSALFGRD…ANHTALRGSH (362 aa). An N-linked (GlcNAc...) asparagine glycan is attached at N57. Cysteines 77 and 119 form a disulfide. UDP-alpha-D-galactose is bound at residue 130 to 134; that stretch reads PHRAR. The N-linked (GlcNAc...) asparagine glycan is linked to N166. Residues 169–171, 196–197, Y226, and W258 contribute to the UDP-alpha-D-galactose site; these read FNR and VD. A disulfide bridge connects residues C190 and C209. D197 serves as a coordination point for Mn(2+). Residue 260 to 263 participates in N-acetyl-D-glucosamine binding; that stretch reads GEDD. H291 provides a ligand contact to Mn(2+). A UDP-alpha-D-galactose-binding site is contributed by 291–293; the sequence is HRG. R303 is an N-acetyl-D-glucosamine binding site. Residues N337 and N385 are each glycosylated (N-linked (GlcNAc...) asparagine). Positions 339–393 are disordered; it reads TADIGTDPRGPRAPSGPRYPPGSSQAFRQEMLQRRPPARPGPPPTANHTALRGSH.

Belongs to the glycosyltransferase 7 family. Mn(2+) is required as a cofactor.

The protein localises to the golgi apparatus. It is found in the golgi stack membrane. The enzyme catalyses an N-acetyl-beta-D-glucosaminyl derivative + UDP-alpha-D-galactose = a beta-D-galactosyl-(1-&gt;4)-N-acetyl-beta-D-glucosaminyl derivative + UDP + H(+). It carries out the reaction N-acetyl-D-glucosamine + UDP-alpha-D-galactose = beta-D-galactosyl-(1-&gt;4)-N-acetyl-D-glucosamine + UDP + H(+). It catalyses the reaction a beta-D-GlcNAc-(1-&gt;3)-beta-D-Gal-(1-&gt;4)-beta-D-Glc-(1&lt;-&gt;1)-Cer(d18:1(4E)) + UDP-alpha-D-galactose = a neolactoside nLc4Cer(d18:1(4E)) + UDP + H(+). The catalysed reaction is a beta-D-glucosylceramide + UDP-alpha-D-galactose = a beta-D-galactosyl-(1-&gt;4)-beta-D-glucosyl-(1&lt;-&gt;1)-ceramide + UDP + H(+). The enzyme catalyses a neolactoside IV(3)-beta-GlcNAc-nLc4Cer + UDP-alpha-D-galactose = a neolactoside nLc6Cer + UDP + H(+). Its pathway is protein modification; protein glycosylation. Functionally, responsible for the synthesis of complex-type N-linked oligosaccharides in many glycoproteins as well as the carbohydrate moieties of glycolipids. The polypeptide is Beta-1,4-galactosyltransferase 3 (B4GALT3) (Pongo abelii (Sumatran orangutan)).